A 229-amino-acid polypeptide reads, in one-letter code: Peptidase E (229 aa).

Catalysis depends on charge relay system residues Ser120, Asp135, and His157.

The protein belongs to the peptidase S51 family.

Its subcellular location is the cytoplasm. It catalyses the reaction Dipeptidase E catalyzes the hydrolysis of dipeptides Asp-|-Xaa. It does not act on peptides with N-terminal Glu, Asn or Gln, nor does it cleave isoaspartyl peptides.. In terms of biological role, hydrolyzes dipeptides containing N-terminal aspartate residues. May play a role in allowing the cell to use peptide aspartate to spare carbon otherwise required for the synthesis of the aspartate family of amino acids. The polypeptide is Peptidase E (Shigella flexneri serotype 5b (strain 8401)).